The primary structure comprises 344 residues: Uroporphyrinogen decarboxylase (344 aa).

Residues 27 to 31, Phe46, Asp77, Tyr153, Thr208, and His324 contribute to the substrate site; that span reads RQAGR.

This sequence belongs to the uroporphyrinogen decarboxylase family. As to quaternary structure, homodimer.

It is found in the cytoplasm. It catalyses the reaction uroporphyrinogen III + 4 H(+) = coproporphyrinogen III + 4 CO2. It participates in porphyrin-containing compound metabolism; protoporphyrin-IX biosynthesis; coproporphyrinogen-III from 5-aminolevulinate: step 4/4. In terms of biological role, catalyzes the decarboxylation of four acetate groups of uroporphyrinogen-III to yield coproporphyrinogen-III. In Bradyrhizobium diazoefficiens (strain JCM 10833 / BCRC 13528 / IAM 13628 / NBRC 14792 / USDA 110), this protein is Uroporphyrinogen decarboxylase.